The primary structure comprises 182 residues: PTS system glucitol/sorbitol-specific EIIC component (182 aa).

A PTS EIIC type-5 domain is found at 1-182 (MDAIVYFAKG…IELSNQLKAN (182 aa)). The next 3 helical transmembrane spans lie at 28 to 48 (GIIPKVLLLLVFMNSIIAFIG), 63 to 83 (VILAYGVLPFLSAFMLGNPMA), and 139 to 159 (TALGLRYLLVGLVMNFFAGWV).

The protein localises to the cell membrane. In terms of biological role, the phosphoenolpyruvate-dependent sugar phosphotransferase system (PTS), a major carbohydrate active transport system, catalyzes the phosphorylation of incoming sugar substrates concomitant with their translocation across the cell membrane. The enzyme II complex composed of SrlA, SrlB and SrlE is involved in glucitol/sorbitol transport. The sequence is that of PTS system glucitol/sorbitol-specific EIIC component (srlA) from Clostridium beijerinckii (strain ATCC 51743 / NCIMB 8052) (Clostridium acetobutylicum).